The sequence spans 301 residues: Acetylglutamate kinase (301 aa).

Residues 72 to 73 (GG), Arg94, and Asn199 each bind substrate.

Belongs to the acetylglutamate kinase family. ArgB subfamily.

The protein localises to the cytoplasm. The enzyme catalyses N-acetyl-L-glutamate + ATP = N-acetyl-L-glutamyl 5-phosphate + ADP. Its pathway is amino-acid biosynthesis; L-arginine biosynthesis; N(2)-acetyl-L-ornithine from L-glutamate: step 2/4. Functionally, catalyzes the ATP-dependent phosphorylation of N-acetyl-L-glutamate. This Bartonella henselae (strain ATCC 49882 / DSM 28221 / CCUG 30454 / Houston 1) (Rochalimaea henselae) protein is Acetylglutamate kinase.